Here is a 433-residue protein sequence, read N- to C-terminus: FAD-dependent monooxygenase notI' (433 aa).

The FAD site is built by glutamate 45 and arginine 117. The active site involves arginine 195. The FAD site is built by aspartate 314 and alanine 327.

The protein belongs to the paxM FAD-dependent monooxygenase family. The cofactor is FAD.

The protein operates within alkaloid biosynthesis. Its function is as follows. FAD-dependent monooxygenase; part of the gene cluster that mediates the biosynthesis of notoamide, a fungal indole alkaloid that belongs to a family of natural products containing a characteristic bicyclo[2.2.2]diazaoctane core. The first step of notoamide biosynthesis involves coupling of L-proline and L-tryptophan by the bimodular NRPS notE', to produce cyclo-L-tryptophan-L-proline called brevianamide F. The reverse prenyltransferase notF' then acts as a deoxybrevianamide E synthase and converts brevianamide F to deoxybrevianamide E via reverse prenylation at C-2 of the indole ring leading to the bicyclo[2.2.2]diazaoctane core. Deoxybrevianamide E is further hydroxylated at C-6 of the indole ring, likely catalyzed by the cytochrome P450 monooxygenase notG', to yield 6-hydroxy-deoxybrevianamide E. 6-hydroxy-deoxybrevianamide E is a specific substrate of the prenyltransferase notC' for normal prenylation at C-7 to produce 6-hydroxy-7-prenyl-deoxybrevianamide, also called notoamide S. As the proposed pivotal branching point in notoamide biosynthesis, notoamide S can be diverted to notoamide E through an oxidative pyran ring closure putatively catalyzed by either notH' cytochrome P450 monooxygenase or the notD' FAD-linked oxidoreductase. This step would be followed by an indole 2,3-epoxidation-initiated pinacol-like rearrangement catalyzed by the notB' FAD-dependent monooxygenase leading to the formation of notoamide C and notoamide D. On the other hand notoamide S is converted to notoamide T by notH' (or notD'), a bifunctional oxidase that also functions as the intramolecular Diels-Alderase responsible for generation of (-)-notoamide T. To generate antipodal (+)-notoaminide T, notH (or notD) in Aspergillus strain MF297-2 is expected to catalyze a Diels-Alder reaction leading to the opposite stereochemistry. The remaining oxidoreductase notD' (or notH') likely catalyzes the oxidative pyran ring formation to yield (-)-stephacidin A. The FAD-dependent monooxygenase notI' is highly similar to notB' and is predicted to catalyze a similar conversion from (-)-stephacidin A to (+)-notoamide B via the 2,3-epoxidation of (-)-stephacidin A followed by a pinacol-type rearrangement. Finally, it remains unclear which enzyme could be responsible for the final hydroxylation steps leading to notoamide A and sclerotiamide. In Aspergillus versicolor, this protein is FAD-dependent monooxygenase notI'.